The chain runs to 511 residues: MSSSTESLPGTLRRTLTTSRAPAATSSQRLKAGYFVSNAFLPRVKANGIHDSASSQRSTTVASTTSTTADAADGSSSTTQPTTAADLPPVDNTLLPHRRRQAQRKAAAAAAAAAANGETPTPLINPDAPTADLAPDASSQLAAAAASAPADSLKRRLSSLLSLSKPRLTVLVVLSAMVPYALYPVPSFLTSSALDTSLAPSLSPLTLLFLTTGTTLCSASANALNMLYEPDTDSKMTRTRTRPLVRRLLTTKAAVLFAVGCGLAGTLALYFGVNPTVSFLGAANIALYAGAYTPLKRISAVNTWVGAIVGGIPPLMGWAAAAGESATGDGTWRELLFASDGSSLGGWLFAGLLFAWQFPHFMPLSWGIRHEYKAAGLRMLAWTNPARNGRVALRYSLAFIPLCVGLSATGVTEWSFAVTSLPVNAWLVWEAIKFWRLEGHKGSARGLFWASVWHLPVIMVLALAQKKGMWGRVWRSVFGEPEEEEGEWVYEDEDEEEGGGVGEVVKGVVKK.

The N-terminal 23 residues, 1–23, are a transit peptide targeting the mitochondrion; that stretch reads MSSSTESLPGTLRRTLTTSRAPA. 2 disordered regions span residues 1-27 and 50-136; these read MSSSTESLPGTLRRTLTTSRAPAATSS and HDSA…LAPD. 3 stretches are compositionally biased toward low complexity: residues 52 to 79, 104 to 115, and 126 to 136; these read SASSQRSTTVASTTSTTADAADGSSSTT, RKAAAAAAAAAA, and PDAPTADLAPD. 8 helical membrane-spanning segments follow: residues 168–188, 197–217, 253–273, 275–295, 303–323, 344–364, 398–418, and 444–464; these read LTVLVVLSAMVPYALYPVPSF, SLAPSLSPLTLLFLTTGTTLC, AAVLFAVGCGLAGTLALYFGV, PTVSFLGAANIALYAGAYTPL, TWVGAIVGGIPPLMGWAAAAG, LGGWLFAGLLFAWQFPHFMPL, AFIPLCVGLSATGVTEWSFAV, and ARGLFWASVWHLPVIMVLALA.

This sequence belongs to the UbiA prenyltransferase family.

The protein resides in the mitochondrion membrane. Its function is as follows. Converts protoheme IX and farnesyl diphosphate to heme O. The polypeptide is Protoheme IX farnesyltransferase, mitochondrial (pft-1) (Neurospora crassa (strain ATCC 24698 / 74-OR23-1A / CBS 708.71 / DSM 1257 / FGSC 987)).